A 327-amino-acid polypeptide reads, in one-letter code: Sphingomyelin synthase-related 2 (327 aa).

The next 5 helical transmembrane spans lie at 54 to 74 (LLAT…LAWV), 99 to 119 (AIRI…LVMF), 131 to 151 (VFFC…IFQV), 192 to 212 (LCGD…FLVF), and 220 to 240 (LQPL…SILL). The active site involves His201. Residues 241–327 (ARKHYMIDIV…TLKKSRRSFE (87 aa)) are Cytoplasmic-facing. Active-site residues include His244 and Asp248.

This sequence belongs to the sphingomyelin synthase family.

The protein localises to the membrane. The protein is Sphingomyelin synthase-related 2 of Caenorhabditis elegans.